Consider the following 1142-residue polypeptide: Desmoglein-2.1 (1142 aa).

Residues 1-18 form the signal peptide; it reads MARRISPVVAFLLCFGLS. The propeptide occupies 19-38; that stretch reads HFFEAEARLQHSVALHRQKR. Residues 39–643 are Extracellular-facing; the sequence is EWIVPPQILE…AKKGSRLGPA (605 aa). Cadherin domains lie at 64-148, 156-258, 259-416, and 417-527; these read SDKE…APVF, VDEL…VPTL, GGPY…GPKF, and FPGT…CPTL. N-linked (GlcNAc...) asparagine glycosylation is present at asparagine 115. The interval 369–389 is disordered; that stretch reads SGAAGGAGAMGGASGSGGGTG. Asparagine 490 and asparagine 576 each carry an N-linked (GlcNAc...) asparagine glycan. The chain crosses the membrane as a helical span at residues 644 to 664; sequence GIGLLLLALLALLLIPLLLLL. The Cytoplasmic portion of the chain corresponds to 665-1142; it reads CTCGMTGAFT…RKVVTTQSVK (478 aa). 4 Desmoglein repeat repeats span residues 948–974, 975–998, 999–1039, and 1040–1071; these read VEQQPSTVLVAERPAMTQGMYVLNSGP, VAEGMVVQGGNIAANTLTRGERMV, LVFR…VLQG, and TIQRGVAGSQGLMFVDGQGGQVIQGSINNGIS.

The protein resides in the cell junction. Its subcellular location is the desmosome. It localises to the cell membrane. It is found in the cytoplasm. Functionally, a component of desmosome cell-cell junctions which are required for positive regulation of cellular adhesion. Involved in the interaction of plaque proteins and intermediate filaments mediating cell-cell adhesion. Required for embryogenesis, specifically for progression of epiboly and normal convergence-extension movements during gastrulation. In Danio rerio (Zebrafish), this protein is Desmoglein-2.1.